The following is a 516-amino-acid chain: GMP synthase [glutamine-hydrolyzing] (516 aa).

A Glutamine amidotransferase type-1 domain is found at 8–198; it reads KILILDFGSQ…VVNICGCDTL (191 aa). The active-site Nucleophile is cysteine 84. Active-site residues include histidine 172 and glutamate 174. A GMPS ATP-PPase domain is found at 199 to 391; it reads WNIENIIEND…LGLPYNMLYR (193 aa). Residue 226 to 232 coordinates ATP; sequence SGGVDSS.

Homodimer.

The enzyme catalyses XMP + L-glutamine + ATP + H2O = GMP + L-glutamate + AMP + diphosphate + 2 H(+). It participates in purine metabolism; GMP biosynthesis; GMP from XMP (L-Gln route): step 1/1. Functionally, catalyzes the synthesis of GMP from XMP. The chain is GMP synthase [glutamine-hydrolyzing] from Francisella tularensis subsp. novicida (strain U112).